Here is a 108-residue protein sequence, read N- to C-terminus: ATP-dependent Clp protease adapter protein ClpS (108 aa).

Over residues 1 to 15 (MPHESSPDSQHEHGV) the composition is skewed to basic and acidic residues. The tract at residues 1–22 (MPHESSPDSQHEHGVAVEAARP) is disordered.

It belongs to the ClpS family. Binds to the N-terminal domain of the chaperone ClpA.

Its function is as follows. Involved in the modulation of the specificity of the ClpAP-mediated ATP-dependent protein degradation. This Stenotrophomonas maltophilia (strain K279a) protein is ATP-dependent Clp protease adapter protein ClpS.